The chain runs to 383 residues: Succinyl-diaminopimelate desuccinylase (383 aa).

A Zn(2+)-binding site is contributed by His-74. The active site involves Asp-76. A Zn(2+)-binding site is contributed by Asp-107. Catalysis depends on Glu-141, which acts as the Proton acceptor. Glu-142, Glu-170, and His-356 together coordinate Zn(2+).

Belongs to the peptidase M20A family. DapE subfamily. In terms of assembly, homodimer. Requires Zn(2+) as cofactor. It depends on Co(2+) as a cofactor.

It carries out the reaction N-succinyl-(2S,6S)-2,6-diaminopimelate + H2O = (2S,6S)-2,6-diaminopimelate + succinate. Its pathway is amino-acid biosynthesis; L-lysine biosynthesis via DAP pathway; LL-2,6-diaminopimelate from (S)-tetrahydrodipicolinate (succinylase route): step 3/3. In terms of biological role, catalyzes the hydrolysis of N-succinyl-L,L-diaminopimelic acid (SDAP), forming succinate and LL-2,6-diaminopimelate (DAP), an intermediate involved in the bacterial biosynthesis of lysine and meso-diaminopimelic acid, an essential component of bacterial cell walls. This is Succinyl-diaminopimelate desuccinylase from Cupriavidus necator (strain ATCC 17699 / DSM 428 / KCTC 22496 / NCIMB 10442 / H16 / Stanier 337) (Ralstonia eutropha).